Reading from the N-terminus, the 83-residue chain is Cytochrome b559 subunit alpha (83 aa).

The chain crosses the membrane as a helical span at residues 21 to 35 (VIHSITIPSLFIAGW). Residue His23 coordinates heme.

This sequence belongs to the PsbE/PsbF family. Heterodimer of an alpha subunit and a beta subunit. PSII is composed of 1 copy each of membrane proteins PsbA, PsbB, PsbC, PsbD, PsbE, PsbF, PsbH, PsbI, PsbJ, PsbK, PsbL, PsbM, PsbT, PsbX, PsbY, PsbZ, Psb30/Ycf12, at least 3 peripheral proteins of the oxygen-evolving complex and a large number of cofactors. It forms dimeric complexes. The cofactor is heme b.

The protein localises to the plastid. It localises to the chloroplast thylakoid membrane. This b-type cytochrome is tightly associated with the reaction center of photosystem II (PSII). PSII is a light-driven water:plastoquinone oxidoreductase that uses light energy to abstract electrons from H(2)O, generating O(2) and a proton gradient subsequently used for ATP formation. It consists of a core antenna complex that captures photons, and an electron transfer chain that converts photonic excitation into a charge separation. The protein is Cytochrome b559 subunit alpha of Helianthus annuus (Common sunflower).